The following is a 932-amino-acid chain: Serine/threonine-protein kinase PknD (932 aa).

The 288-residue stretch at tyrosine 4–leucine 291 folds into the Protein kinase domain. ATP contacts are provided by residues isoleucine 10–valine 18 and lysine 33. Aspartate 138 functions as the Proton acceptor in the catalytic mechanism.

Belongs to the protein kinase superfamily. Ser/Thr protein kinase family. Autophosphorylated on serine and threonine residues.

The catalysed reaction is L-seryl-[protein] + ATP = O-phospho-L-seryl-[protein] + ADP + H(+). It carries out the reaction L-threonyl-[protein] + ATP = O-phospho-L-threonyl-[protein] + ADP + H(+). Together with the serine/threonine kinase Pkn1, may play a role in the specific interactions with host proteins during intracellular growth. This is Serine/threonine-protein kinase PknD from Chlamydia pneumoniae (Chlamydophila pneumoniae).